The chain runs to 83 residues: Small ribosomal subunit protein eS21 (83 aa).

The protein belongs to the eukaryotic ribosomal protein eS21 family. As to quaternary structure, component of the 40S small ribosomal subunit.

It localises to the cytoplasm. Its subcellular location is the cytosol. The protein resides in the rough endoplasmic reticulum. The sequence is that of Small ribosomal subunit protein eS21 (RpS21) from Biphyllus lunatus (Beetle).